Here is a 313-residue protein sequence, read N- to C-terminus: Beta-ribofuranosylphenol 5'-phosphate synthase (313 aa).

It belongs to the beta-RFA-P synthase family. In terms of assembly, homodimer.

The catalysed reaction is 5-phospho-alpha-D-ribose 1-diphosphate + 4-hydroxybenzoate + H(+) = 4-(beta-D-ribofuranosyl)phenol 5'-phosphate + CO2 + diphosphate. The enzyme catalyses 4-aminobenzoate + 5-phospho-alpha-D-ribose 1-diphosphate + H(+) = 4-(beta-D-ribofuranosyl)aminobenzene 5'-phosphate + CO2 + diphosphate. The protein operates within cofactor biosynthesis; 5,6,7,8-tetrahydromethanopterin biosynthesis. Functionally, catalyzes the condensation of 4-hydroxybenzoate (HB) with 5-phospho-alpha-D-ribose 1-diphosphate (PRPP) to produce beta-ribofuranosylphenol 5'-phosphate (beta-RFH-P). Also catalyzes the condensation of 4-aminobenzoate (pABA) with PRPP to produce beta-ribofuranosylaminobenzene 5'-phosphate (beta-RFA-P). The chain is Beta-ribofuranosylphenol 5'-phosphate synthase from Archaeoglobus fulgidus (strain ATCC 49558 / DSM 4304 / JCM 9628 / NBRC 100126 / VC-16).